A 95-amino-acid polypeptide reads, in one-letter code: UPF0358 protein GTNG_0942 (95 aa).

The protein belongs to the UPF0358 family.

This Geobacillus thermodenitrificans (strain NG80-2) protein is UPF0358 protein GTNG_0942.